A 65-amino-acid polypeptide reads, in one-letter code: Ferredoxin soy (65 aa).

One can recognise a 4Fe-4S ferredoxin-type domain in the interval 2–29 (GVQVDKERCVGAGMCALTAPDVFTQDDD). [3Fe-4S] cluster contacts are provided by cysteine 10, cysteine 16, and cysteine 55.

Requires [3Fe-4S] cluster as cofactor.

Its function is as follows. Electron transport protein for the cytochrome P-450-SOY system. The polypeptide is Ferredoxin soy (soyB) (Streptomyces griseus).